The sequence spans 191 residues: Cytochrome c oxidase assembly protein CtaG (191 aa).

The Cytoplasmic portion of the chain corresponds to 1 to 9 (MALNGPQKT). A helical; Signal-anchor for type II membrane protein membrane pass occupies residues 10-30 (VVQLVSVVVVMGGLAWASVPF). Residues 31 to 191 (YDWFCRVTGF…LDAGEKTNTN (161 aa)) are Periplasmic-facing.

The protein belongs to the COX11/CtaG family.

The protein resides in the cell inner membrane. Functionally, exerts its effect at some terminal stage of cytochrome c oxidase synthesis, probably by being involved in the insertion of the copper B into subunit I. The chain is Cytochrome c oxidase assembly protein CtaG from Ruegeria pomeroyi (strain ATCC 700808 / DSM 15171 / DSS-3) (Silicibacter pomeroyi).